The chain runs to 332 residues: 4-hydroxy-3-methylbut-2-enyl diphosphate reductase (332 aa).

Residue Cys-34 coordinates [4Fe-4S] cluster. (2E)-4-hydroxy-3-methylbut-2-enyl diphosphate is bound by residues His-63 and His-96. Dimethylallyl diphosphate-binding residues include His-63 and His-96. Isopentenyl diphosphate is bound by residues His-63 and His-96. Cys-118 is a binding site for [4Fe-4S] cluster. His-146 contacts (2E)-4-hydroxy-3-methylbut-2-enyl diphosphate. A dimethylallyl diphosphate-binding site is contributed by His-146. His-146 is an isopentenyl diphosphate binding site. The Proton donor role is filled by Glu-148. Thr-186 contacts (2E)-4-hydroxy-3-methylbut-2-enyl diphosphate. [4Fe-4S] cluster is bound at residue Cys-216. Residues Ser-244, Ser-245, Asn-246, and Ser-289 each coordinate (2E)-4-hydroxy-3-methylbut-2-enyl diphosphate. Residues Ser-244, Ser-245, Asn-246, and Ser-289 each contribute to the dimethylallyl diphosphate site. 4 residues coordinate isopentenyl diphosphate: Ser-244, Ser-245, Asn-246, and Ser-289.

This sequence belongs to the IspH family. The cofactor is [4Fe-4S] cluster.

The catalysed reaction is isopentenyl diphosphate + 2 oxidized [2Fe-2S]-[ferredoxin] + H2O = (2E)-4-hydroxy-3-methylbut-2-enyl diphosphate + 2 reduced [2Fe-2S]-[ferredoxin] + 2 H(+). It carries out the reaction dimethylallyl diphosphate + 2 oxidized [2Fe-2S]-[ferredoxin] + H2O = (2E)-4-hydroxy-3-methylbut-2-enyl diphosphate + 2 reduced [2Fe-2S]-[ferredoxin] + 2 H(+). It functions in the pathway isoprenoid biosynthesis; dimethylallyl diphosphate biosynthesis; dimethylallyl diphosphate from (2E)-4-hydroxy-3-methylbutenyl diphosphate: step 1/1. The protein operates within isoprenoid biosynthesis; isopentenyl diphosphate biosynthesis via DXP pathway; isopentenyl diphosphate from 1-deoxy-D-xylulose 5-phosphate: step 6/6. Functionally, catalyzes the conversion of 1-hydroxy-2-methyl-2-(E)-butenyl 4-diphosphate (HMBPP) into a mixture of isopentenyl diphosphate (IPP) and dimethylallyl diphosphate (DMAPP). Acts in the terminal step of the DOXP/MEP pathway for isoprenoid precursor biosynthesis. The polypeptide is 4-hydroxy-3-methylbut-2-enyl diphosphate reductase (Mycobacterium ulcerans (strain Agy99)).